Reading from the N-terminus, the 574-residue chain is Probable cytochrome c oxidase subunit 1 (574 aa).

A helical transmembrane segment spans residues Ile40 to Leu60. His86 contacts Fe(II)-heme a. 6 helical membrane passes run Ile89–Leu109, Leu121–Ile141, Leu170–Ile190, Ile213–Gly233, Leu258–Val278, and Ile290–Val310. Residues His264 and Tyr268 each coordinate Cu cation. The segment at residues His264 to Tyr268 is a cross-link (1'-histidyl-3'-tyrosine (His-Tyr)). Cu cation is bound by residues His313 and His314. The next 2 helical transmembrane spans lie at Met315–Val335 and Met359–Leu379. A heme a3-binding site is contributed by His397. Transmembrane regions (helical) follow at residues Phe398 to Phe418, Leu433 to Gly453, and Val476 to Phe496. His399 is a Fe(II)-heme a binding site.

This sequence belongs to the heme-copper respiratory oxidase family. As to quaternary structure, associates with subunits II, III and IV to form cytochrome c oxidase. Cu(2+) is required as a cofactor. Heme serves as cofactor.

The protein resides in the cell membrane. The enzyme catalyses 4 Fe(II)-[cytochrome c] + O2 + 8 H(+)(in) = 4 Fe(III)-[cytochrome c] + 2 H2O + 4 H(+)(out). The protein operates within energy metabolism; oxidative phosphorylation. Its function is as follows. Cytochrome c oxidase is the component of the respiratory chain that catalyzes the reduction of oxygen to water. Subunits 1-3 form the functional core of the enzyme complex. CO I is the catalytic subunit of the enzyme. Electrons originating in cytochrome c are transferred via the copper A center of subunit 2 and heme A of subunit 1 to the bimetallic center formed by heme A3 and copper B. This chain is Probable cytochrome c oxidase subunit 1 (ctaD), found in Mycobacterium leprae (strain TN).